Here is a 568-residue protein sequence, read N- to C-terminus: 2-succinyl-5-enolpyruvyl-6-hydroxy-3-cyclohexene-1-carboxylate synthase (568 aa).

The protein belongs to the TPP enzyme family. MenD subfamily. As to quaternary structure, homodimer. Requires Mg(2+) as cofactor. Mn(2+) serves as cofactor. Thiamine diphosphate is required as a cofactor.

The catalysed reaction is isochorismate + 2-oxoglutarate + H(+) = 5-enolpyruvoyl-6-hydroxy-2-succinyl-cyclohex-3-ene-1-carboxylate + CO2. It functions in the pathway quinol/quinone metabolism; 1,4-dihydroxy-2-naphthoate biosynthesis; 1,4-dihydroxy-2-naphthoate from chorismate: step 2/7. The protein operates within quinol/quinone metabolism; menaquinone biosynthesis. Functionally, catalyzes the thiamine diphosphate-dependent decarboxylation of 2-oxoglutarate and the subsequent addition of the resulting succinic semialdehyde-thiamine pyrophosphate anion to isochorismate to yield 2-succinyl-5-enolpyruvyl-6-hydroxy-3-cyclohexene-1-carboxylate (SEPHCHC). The protein is 2-succinyl-5-enolpyruvyl-6-hydroxy-3-cyclohexene-1-carboxylate synthase of Histophilus somni (strain 129Pt) (Haemophilus somnus).